A 78-amino-acid chain; its full sequence is Protein SlyX homolog (78 aa).

It belongs to the SlyX family.

This chain is Protein SlyX homolog, found in Photobacterium profundum (strain SS9).